The sequence spans 441 residues: Protein cortex (441 aa).

WD repeat units follow at residues 110-148 (SITS…VDQG), 149-187 (QTMF…QFVQ), 193-233 (IQIC…KSLV), 235-276 (IEGA…RFMK), 277-320 (TNEI…KLRQ), 345-379 (SLWS…ESHT), and 380-420 (GLNR…KILA). Residues 379–390 (TGLNRIRTMVFS) carry the D-box motif.

It belongs to the WD repeat CORT family.

Its subcellular location is the cytoplasm. Its function is as follows. Controls wing pigmentation patterning, possibly by regulating scale cell development. Probably acts as an activator of the anaphase promoting complex/cyclosome (APC/C) that promotes the ubiquitin ligase activity and substrate specificity of the APC/C. In Biston betularia (Pepper-and-salt geometer moth), this protein is Protein cortex.